We begin with the raw amino-acid sequence, 506 residues long: Secreted RxLR effector protein 134 (506 aa).

An N-terminal signal peptide occupies residues 1–19 (MQGAYCVAVALLIAASGQA). The short motif at 50–71 (RVLQVSHYPKDDLMLLAGNEER) is the RxLR-dEER element.

This sequence belongs to the RxLR effector family.

It is found in the secreted. The protein resides in the host nucleus. Secreted effector that completely suppresses the host cell death induced by cell death-inducing proteins. The polypeptide is Secreted RxLR effector protein 134 (Plasmopara viticola (Downy mildew of grapevine)).